A 639-amino-acid polypeptide reads, in one-letter code: Protein phosphatase 2C 35 (639 aa).

The 404-residue stretch at 227–630 (GGDPCGLQWA…DDVSVIVISL (404 aa)) folds into the PPM-type phosphatase domain. The Mn(2+) site is built by aspartate 262 and glycine 263. The interval 295–341 (QNVQHDQRPDQPGSAPSTTASDNQDQWGRRRRTRRSRPPRGADDDQR) is disordered. Polar residues predominate over residues 308-320 (SAPSTTASDNQDQ). The span at 323–332 (RRRRTRRSRP) shows a compositional bias: basic residues. 2 residues coordinate Mn(2+): aspartate 558 and aspartate 621.

Belongs to the PP2C family. As to quaternary structure, interacts with XA21 (via juxtamembrane and kinase domains). Mg(2+) is required as a cofactor. Requires Mn(2+) as cofactor.

Its subcellular location is the cell membrane. The catalysed reaction is O-phospho-L-seryl-[protein] + H2O = L-seryl-[protein] + phosphate. It catalyses the reaction O-phospho-L-threonyl-[protein] + H2O = L-threonyl-[protein] + phosphate. Protein phosphatase that acts on XA21 pathogen recognition receptor. Negatively regulates cell death and XA21-mediated innate immunity. The chain is Protein phosphatase 2C 35 (XB15) from Oryza sativa subsp. japonica (Rice).